Reading from the N-terminus, the 218-residue chain is Glutathione S-transferase Mu 1 (218 aa).

The GST N-terminal domain maps to 2-88 (PMILGYWDIR…YIARKHNLCG (87 aa)). 7–8 (YW) provides a ligand contact to glutathione. A Phosphothreonine modification is found at Thr34. Glutathione contacts are provided by residues 43–46 (RSQW), Lys50, 59–60 (NL), and 72–73 (QS). One can recognise a GST C-terminal domain in the interval 90–208 (TEEEKIRVDI…KSSRFLPRPV (119 aa)). Tyr116 contributes to the substrate binding site. Ser210 bears the Phosphoserine mark.

This sequence belongs to the GST superfamily. Mu family. In terms of assembly, homodimer. In terms of tissue distribution, liver (at protein level).

Its subcellular location is the cytoplasm. It carries out the reaction RX + glutathione = an S-substituted glutathione + a halide anion + H(+). The catalysed reaction is prostaglandin A2 + glutathione = prostaglandin A2-S-(R)-glutathione. The enzyme catalyses prostaglandin J2 + glutathione = prostaglandin J2-S-(R)-glutathione. It catalyses the reaction prostaglandin J2 + glutathione = prostaglandin J2-S-(S)-glutathione. It carries out the reaction prostaglandin A2 + glutathione = prostaglandin A2-S-(S)-glutathione. The catalysed reaction is 11(S)-hydroxy-14(S),15(S)-epoxy-(5Z,8Z,12E)-eicosatrienoate + glutathione = (11S,15S)-dihydroxy-14(R)-S-glutathionyl-(5Z,8Z,12E)-eicosatrienoate. Its function is as follows. Conjugation of reduced glutathione to a wide number of exogenous and endogenous hydrophobic electrophiles. Involved in the formation of glutathione conjugates of both prostaglandin A2 (PGA2) and prostaglandin J2 (PGJ2). Participates in the formation of novel hepoxilin regioisomers. In Homo sapiens (Human), this protein is Glutathione S-transferase Mu 1.